The sequence spans 236 residues: Small ribosomal subunit protein uS2c (236 aa).

The protein belongs to the universal ribosomal protein uS2 family.

Its subcellular location is the plastid. The protein resides in the chloroplast. In Guizotia abyssinica (Niger), this protein is Small ribosomal subunit protein uS2c (rps2).